The following is a 294-amino-acid chain: NAD kinase (294 aa).

Asp-74 functions as the Proton acceptor in the catalytic mechanism. NAD(+)-binding positions include 74 to 75 (DG), Lys-79, 149 to 150 (NE), Asp-179, 190 to 195 (TGYSLS), and Ala-214.

It belongs to the NAD kinase family. A divalent metal cation serves as cofactor.

The protein resides in the cytoplasm. The catalysed reaction is NAD(+) + ATP = ADP + NADP(+) + H(+). Its function is as follows. Involved in the regulation of the intracellular balance of NAD and NADP, and is a key enzyme in the biosynthesis of NADP. Catalyzes specifically the phosphorylation on 2'-hydroxyl of the adenosine moiety of NAD to yield NADP. The sequence is that of NAD kinase from Christiangramia forsetii (strain DSM 17595 / CGMCC 1.15422 / KT0803) (Gramella forsetii).